The chain runs to 222 residues: Extracellular protein ARB_03106 (222 aa).

The signal sequence occupies residues 1–18; that stretch reads MRLHSVLAVATAVGCAVA. N-linked (GlcNAc...) asparagine glycans are attached at residues asparagine 113 and asparagine 126.

The protein resides in the secreted. This is Extracellular protein ARB_03106 from Arthroderma benhamiae (strain ATCC MYA-4681 / CBS 112371) (Trichophyton mentagrophytes).